The sequence spans 468 residues: MKVDFDDLNNIFFVGIKGSGACSLACFLNSKGYCVEGVDVSDKFYTDEILSNNKISYYDNIYEFSLKQLDRSFDLIVYSSAYNKDGLQVLLEAKELNIPILSYPEALGELSRKYYSIGIAGSHGKTTTTAFLGVLFNKLGLNPNVIVGSSVKDFKDNSAIAGISNIFIVETCEYKKHFLNFSPNMLILTNVDYEHVDFFKNYEALEEAFLQYINNLKKNGILIINSDDNNLLKIKRQINRKDISIFSYGSGDLSDFQISNIAVRSEYFCFSFLGLLNVELKTVLFHNVLNFSAALLALNLFLESNGKSIFDFEEAIKRIAKNYSGIKRRVEVVKEENGVIYMDDYAHHPREIKNTLFGIKNFYKNKRIILDFMPHTFTRTKEFFADFVEVLSAADILILHNIYLSNRENFNPDELSVKLFLNIKKINKNTYFFKDVKDSINFIKSLLISGDLFITMGAGNNFILHDFL.

121 to 127 serves as a coordination point for ATP; sequence GSHGKTT.

It belongs to the MurCDEF family.

The protein localises to the cytoplasm. The catalysed reaction is UDP-N-acetyl-alpha-D-muramate + L-alanine + ATP = UDP-N-acetyl-alpha-D-muramoyl-L-alanine + ADP + phosphate + H(+). It participates in cell wall biogenesis; peptidoglycan biosynthesis. Functionally, cell wall formation. In Borreliella burgdorferi (strain ATCC 35210 / DSM 4680 / CIP 102532 / B31) (Borrelia burgdorferi), this protein is UDP-N-acetylmuramate--L-alanine ligase.